The chain runs to 186 residues: ADP-ribosylation factor-like protein 8 (186 aa).

Residues 1 to 19 (MLALINRILEWFKSIFWKE) constitute an intramembrane region (note=Mediates targeting to membranes). Residues 29-35 (QFSGKTT), 71-75 (DIGGQ), and 130-133 (NKRD) contribute to the GTP site.

It belongs to the small GTPase superfamily. Arf family. As to quaternary structure, interacts with tubulin. Interacts (in GTP-bound form) with Rilpl. Interacts with unc-104. Expressed throughout development, from embryo to adult stage, in different tissues such as larval motor neurons, salivary glands, testis and ovaries (at protein level).

It is found in the lysosome membrane. Its subcellular location is the synapse. It localises to the cell projection. The protein resides in the axon. The protein localises to the perikaryon. Functionally, required for normal functioning of the late endocytic pathway including lysosome motility and late endosome-lysosome fusion. Not required for the delivery of lysosomal membrane protein-containing vesicles to late endosomes. In larval motor neurons, mediates the anterograde axonal long-range transport of presynaptic lysosome-related vesicles required for presynaptic biogenesis and synaptic function. Acts downstream of Rab2 during presynaptic precursor vesicle biogenesis. Essential role in chromosome segregation. This chain is ADP-ribosylation factor-like protein 8, found in Drosophila melanogaster (Fruit fly).